A 342-amino-acid polypeptide reads, in one-letter code: Cathepsin B-like cysteine proteinase 1 (342 aa).

Positions 1–18 (MKYLVLALCTYLCSQTGA) are cleaved as a signal peptide. A propeptide spans 19 to 86 (DENAAQGIPL…VKEDPDPEVD (68 aa)) (activation peptide). N-linked (GlcNAc...) asparagine glycosylation is present at Asn-99. Cystine bridges form between Cys-100–Cys-128, Cys-111–Cys-156, Cys-147–Cys-214, Cys-148–Cys-152, Cys-185–Cys-218, and Cys-193–Cys-205. The active site involves Cys-114. N-linked (GlcNAc...) asparagine glycosylation is present at Asn-138. The N-linked (GlcNAc...) asparagine glycan is linked to Asn-198. His-285 is an active-site residue. A glycan (N-linked (GlcNAc...) asparagine) is linked at Asn-296. Asn-305 is an active-site residue.

It belongs to the peptidase C1 family.

In terms of biological role, expression of the protease correlates with blood-feeding and suggests a role for the protease in blood digestion. In Haemonchus contortus (Barber pole worm), this protein is Cathepsin B-like cysteine proteinase 1 (AC-1).